The sequence spans 602 residues: Prostaglandin G/H synthase 1 (602 aa).

Positions 1–26 are cleaved as a signal peptide; that stretch reads MSRRSLSLQFPLLLLLLLLPPPPVLL. Residues 34 to 72 enclose the EGF-like domain; it reads PVNPCCYYPCQNQGVCVRFGLDHYQCDCTRTGYSGPNCT. Disulfide bonds link cysteine 38–cysteine 49, cysteine 39–cysteine 161, cysteine 43–cysteine 59, and cysteine 61–cysteine 71. 3 N-linked (GlcNAc...) asparagine glycosylation sites follow: asparagine 70, asparagine 106, and asparagine 146. The active-site Proton acceptor is histidine 209. The active-site For cyclooxygenase activity is the tyrosine 387. Histidine 390 contributes to the heme b binding site. N-linked (GlcNAc...) asparagine glycosylation is present at asparagine 412. Cysteine 571 and cysteine 577 are oxidised to a cystine.

It belongs to the prostaglandin G/H synthase family. Homodimer. Heme b is required as a cofactor.

It is found in the microsome membrane. The protein localises to the endoplasmic reticulum membrane. It catalyses the reaction (5Z,8Z,11Z,14Z)-eicosatetraenoate + AH2 + 2 O2 = prostaglandin H2 + A + H2O. The catalysed reaction is (5Z,8Z,11Z,14Z)-eicosatetraenoate + 2 O2 = prostaglandin G2. The enzyme catalyses prostaglandin G2 + AH2 = prostaglandin H2 + A + H2O. It carries out the reaction (9Z,12Z)-octadecadienoate + AH2 + O2 = (9R)-hydroxy-(10E,12Z)-octadecadienoate + A + H2O. It catalyses the reaction (9Z,12Z)-octadecadienoate + AH2 + O2 = (9S)-hydroxy-(10E,12Z)-octadecadienoate + A + H2O. The catalysed reaction is (9Z,12Z)-octadecadienoate + AH2 + O2 = (13S)-hydroxy-(9Z,11E)-octadecadienoate + A + H2O. The enzyme catalyses (9Z,12Z)-octadecadienoate + AH2 + O2 = (13R)-hydroxy-(9Z,11E)-octadecadienoate + A + H2O. The protein operates within lipid metabolism; prostaglandin biosynthesis. The cyclooxygenase activity is inhibited by nonsteroidal anti-inflammatory drugs (NSAIDs) including ibuprofen, flurbiprofen, ketoprofen, naproxen, flurbiprofen, anirolac, fenclofenac and diclofenac. Its function is as follows. Dual cyclooxygenase and peroxidase that plays an important role in the biosynthesis pathway of prostanoids, a class of C20 oxylipins mainly derived from arachidonate ((5Z,8Z,11Z,14Z)-eicosatetraenoate, AA, C20:4(n-6)), with a particular role in the inflammatory response. The cyclooxygenase activity oxygenates AA to the hydroperoxy endoperoxide prostaglandin G2 (PGG2), and the peroxidase activity reduces PGG2 to the hydroxy endoperoxide prostaglandin H2 (PGH2), the precursor of all 2-series prostaglandins and thromboxanes. This complex transformation is initiated by abstraction of hydrogen at carbon 13 (with S-stereochemistry), followed by insertion of molecular O2 to form the endoperoxide bridge between carbon 9 and 11 that defines prostaglandins. The insertion of a second molecule of O2 (bis-oxygenase activity) yields a hydroperoxy group in PGG2 that is then reduced to PGH2 by two electrons. Involved in the constitutive production of prostanoids in particular in the stomach and platelets. In gastric epithelial cells, it is a key step in the generation of prostaglandins, such as prostaglandin E2 (PGE2), which plays an important role in cytoprotection. In platelets, it is involved in the generation of thromboxane A2 (TXA2), which promotes platelet activation and aggregation, vasoconstriction and proliferation of vascular smooth muscle cells. Can also use linoleate (LA, (9Z,12Z)-octadecadienoate, C18:2(n-6)) as substrate and produce hydroxyoctadecadienoates (HODEs) in a regio- and stereospecific manner, being (9R)-HODE ((9R)-hydroxy-(10E,12Z)-octadecadienoate) and (13S)-HODE ((13S)-hydroxy-(9Z,11E)-octadecadienoate) its major products. The protein is Prostaglandin G/H synthase 1 of Rattus norvegicus (Rat).